The following is a 944-amino-acid chain: Isoleucine--tRNA ligase (944 aa).

The short motif at 58–68 (PYANGSIHIGH) is the 'HIGH' region element. L-isoleucyl-5'-AMP is bound at residue E563. The 'KMSKS' region motif lies at 604–608 (KMSKS). K607 provides a ligand contact to ATP. The Zn(2+) site is built by C907, C910, C927, and C930.

It belongs to the class-I aminoacyl-tRNA synthetase family. IleS type 1 subfamily. Monomer. Zn(2+) serves as cofactor.

The protein localises to the cytoplasm. It carries out the reaction tRNA(Ile) + L-isoleucine + ATP = L-isoleucyl-tRNA(Ile) + AMP + diphosphate. Catalyzes the attachment of isoleucine to tRNA(Ile). As IleRS can inadvertently accommodate and process structurally similar amino acids such as valine, to avoid such errors it has two additional distinct tRNA(Ile)-dependent editing activities. One activity is designated as 'pretransfer' editing and involves the hydrolysis of activated Val-AMP. The other activity is designated 'posttransfer' editing and involves deacylation of mischarged Val-tRNA(Ile). The sequence is that of Isoleucine--tRNA ligase from Salmonella paratyphi A (strain ATCC 9150 / SARB42).